The sequence spans 346 residues: Phosphoribosylformylglycinamidine cyclo-ligase (346 aa).

This sequence belongs to the AIR synthase family.

It is found in the cytoplasm. It catalyses the reaction 2-formamido-N(1)-(5-O-phospho-beta-D-ribosyl)acetamidine + ATP = 5-amino-1-(5-phospho-beta-D-ribosyl)imidazole + ADP + phosphate + H(+). The protein operates within purine metabolism; IMP biosynthesis via de novo pathway; 5-amino-1-(5-phospho-D-ribosyl)imidazole from N(2)-formyl-N(1)-(5-phospho-D-ribosyl)glycinamide: step 2/2. This Polaromonas sp. (strain JS666 / ATCC BAA-500) protein is Phosphoribosylformylglycinamidine cyclo-ligase.